A 194-amino-acid chain; its full sequence is dTTP/UTP pyrophosphatase (194 aa).

Catalysis depends on D73, which acts as the Proton acceptor.

Belongs to the Maf family. YhdE subfamily. Requires a divalent metal cation as cofactor.

The protein localises to the cytoplasm. The enzyme catalyses dTTP + H2O = dTMP + diphosphate + H(+). It carries out the reaction UTP + H2O = UMP + diphosphate + H(+). Functionally, nucleoside triphosphate pyrophosphatase that hydrolyzes dTTP and UTP. May have a dual role in cell division arrest and in preventing the incorporation of modified nucleotides into cellular nucleic acids. This Clostridium botulinum (strain 657 / Type Ba4) protein is dTTP/UTP pyrophosphatase.